The sequence spans 357 residues: Ribosomal RNA small subunit methyltransferase C (357 aa).

The protein belongs to the methyltransferase superfamily. RsmC family. As to quaternary structure, monomer.

The protein resides in the cytoplasm. It catalyses the reaction guanosine(1207) in 16S rRNA + S-adenosyl-L-methionine = N(2)-methylguanosine(1207) in 16S rRNA + S-adenosyl-L-homocysteine + H(+). Its function is as follows. Specifically methylates the guanine in position 1207 of 16S rRNA in the 30S particle. The protein is Ribosomal RNA small subunit methyltransferase C of Colwellia psychrerythraea (strain 34H / ATCC BAA-681) (Vibrio psychroerythus).